We begin with the raw amino-acid sequence, 360 residues long: Photosystem II protein D1 2 (360 aa).

Transmembrane regions (helical) follow at residues 29–46 (YVGWFGVLMIPTLLTATI), 118–133 (HFLIGVFCYMGREWEL), and 142–156 (WICVAYSAPVAAATA). Residue His-118 coordinates chlorophyll a. Tyr-126 contributes to the pheophytin a binding site. Residues Asp-170 and Glu-189 each contribute to the [CaMn4O5] cluster site. Residues 197-218 (FHMLGVAGVFGGSLFSAMHGSL) traverse the membrane as a helical segment. Residue His-198 coordinates chlorophyll a. A quinone is bound by residues His-215 and 264-265 (SF). His-215 serves as a coordination point for Fe cation. His-272 lines the Fe cation pocket. The chain crosses the membrane as a helical span at residues 274–288 (FLAAWPVVGIWFTSL). 4 residues coordinate [CaMn4O5] cluster: His-332, Glu-333, Asp-342, and Ala-344. Positions 345-360 (AGEATPVALTAPAING) are excised as a propeptide.

It belongs to the reaction center PufL/M/PsbA/D family. As to quaternary structure, PSII is composed of 1 copy each of membrane proteins PsbA, PsbB, PsbC, PsbD, PsbE, PsbF, PsbH, PsbI, PsbJ, PsbK, PsbL, PsbM, PsbT, PsbX, PsbY, PsbZ, Psb30/Ycf12, peripheral proteins PsbO, CyanoQ (PsbQ), PsbU, PsbV and a large number of cofactors. It forms dimeric complexes. Requires The D1/D2 heterodimer binds P680, chlorophylls that are the primary electron donor of PSII, and subsequent electron acceptors. It shares a non-heme iron and each subunit binds pheophytin, quinone, additional chlorophylls, carotenoids and lipids. D1 provides most of the ligands for the Mn4-Ca-O5 cluster of the oxygen-evolving complex (OEC). There is also a Cl(-1) ion associated with D1 and D2, which is required for oxygen evolution. The PSII complex binds additional chlorophylls, carotenoids and specific lipids. as cofactor. Post-translationally, tyr-161 forms a radical intermediate that is referred to as redox-active TyrZ, YZ or Y-Z. In terms of processing, C-terminally processed by CtpA; processing is essential to allow assembly of the oxygen-evolving complex and thus photosynthetic growth.

The protein localises to the cellular thylakoid membrane. The enzyme catalyses 2 a plastoquinone + 4 hnu + 2 H2O = 2 a plastoquinol + O2. Functionally, photosystem II (PSII) is a light-driven water:plastoquinone oxidoreductase that uses light energy to abstract electrons from H(2)O, generating O(2) and a proton gradient subsequently used for ATP formation. It consists of a core antenna complex that captures photons, and an electron transfer chain that converts photonic excitation into a charge separation. The D1/D2 (PsbA/PsbD) reaction center heterodimer binds P680, the primary electron donor of PSII as well as several subsequent electron acceptors. This chain is Photosystem II protein D1 2, found in Synechococcus elongatus (strain ATCC 33912 / PCC 7942 / FACHB-805) (Anacystis nidulans R2).